A 270-amino-acid chain; its full sequence is uncharacterized protein (270 aa).

Possibly involved in pGI2 replication mechanism. This is an uncharacterized protein from Bacillus thuringiensis.